The chain runs to 110 residues: Iron-sulfur cluster assembly protein CyaY (110 aa).

Belongs to the frataxin family.

Functionally, involved in iron-sulfur (Fe-S) cluster assembly. May act as a regulator of Fe-S biogenesis. The protein is Iron-sulfur cluster assembly protein CyaY of Azotobacter vinelandii (strain DJ / ATCC BAA-1303).